The sequence spans 764 residues: Thyrotropin receptor (764 aa).

The first 20 residues, 1 to 20, serve as a signal peptide directing secretion; that stretch reads MRPPPLLHLALLLALPRSLG. Over 21-413 the chain is Extracellular; it reads GKGCPSPPCE…EFNPCEDIMG (393 aa). The cysteines at positions 31 and 41 are disulfide-linked. N-linked (GlcNAc...) asparagine glycosylation is found at asparagine 77 and asparagine 99. LRR repeat units follow at residues 125 to 149, 150 to 174, 176 to 199, 201 to 223, 225 to 248, and 250 to 271; these read LPLL…KVYS, TDVF…AFQG, CNET…AFNG, KLDA…AFGG, YSGP…GLEH, and KELI…SFLH. Residues asparagine 177 and asparagine 198 are each glycosylated (N-linked (GlcNAc...) asparagine). An N-linked (GlcNAc...) asparagine glycan is attached at asparagine 302. Tyrosine 385 carries the post-translational modification Sulfotyrosine. Residues 414-441 traverse the membrane as a helical segment; it reads YKFLRIVVWFVSLLALLGNVFVLIVLLT. Topologically, residues 442-450 are cytoplasmic; sequence SHYKLTVPR. Residues 451–473 traverse the membrane as a helical segment; sequence FLMCNLAFADFCMGMYLLLIASV. Residues 474–494 lie on the Extracellular side of the membrane; sequence DLYTHSEYYNHAIDWQTGPGC. A disulfide bridge links cysteine 494 with cysteine 569. Residues 495-517 form a helical membrane-spanning segment; the sequence is NTAGFFTVFASELSVYTLTVITL. Topologically, residues 518–537 are cytoplasmic; it reads ERWYAITFAMRLDRKIRLRH. The chain crosses the membrane as a helical span at residues 538 to 560; that stretch reads AYAIMVGGWVCCFLLALLPLVGI. The Extracellular segment spans residues 561-580; it reads SSYAKVSICLPMDTETPLAL. A helical membrane pass occupies residues 581–602; the sequence is AYIILVLLLNIVAFIIVCSCYV. Residues 603–625 lie on the Cytoplasmic side of the membrane; sequence KIYITVRNPQYNPGDKDTKIAKR. A helical membrane pass occupies residues 626–649; that stretch reads MAVLIFTDFMCMAPISFYALSALM. Residues 650 to 660 lie on the Extracellular side of the membrane; that stretch reads NKPLITVTNSK. A helical transmembrane segment spans residues 661 to 682; sequence ILLVLFYPLNSCANPFLYAIFT. Residues 683 to 764 lie on the Cytoplasmic side of the membrane; that stretch reads KAFQRDVFIL…ISKEYNQTVL (82 aa). Residues 762–764 carry the PDZ-binding motif; the sequence is TVL.

This sequence belongs to the G-protein coupled receptor 1 family. FSH/LSH/TSH subfamily. Interacts with heterodimer GPHA2:GPHB5; this interaction stimulates cAMP production. Interacts (via the PDZ-binding motif) with SCRIB; regulates TSHR trafficking and function. In terms of processing, glycosylated. Post-translationally, sulfated. Sulfation on Tyr-385 plays a role in thyrotropin receptor binding and activation.

The protein resides in the cell membrane. Its subcellular location is the basolateral cell membrane. Receptor for the thyroid-stimulating hormone (TSH) or thyrotropin. Also acts as a receptor for the heterodimeric glycoprotein hormone (GPHA2:GPHB5) or thyrostimulin. The activity of this receptor is mediated by G proteins which activate adenylate cyclase. Plays a central role in controlling thyroid cell metabolism. The polypeptide is Thyrotropin receptor (TSHR) (Canis lupus familiaris (Dog)).